Consider the following 311-residue polypeptide: 4-hydroxy-3-methylbut-2-enyl diphosphate reductase (311 aa).

Cys14 serves as a coordination point for [4Fe-4S] cluster. Residues His43 and His76 each contribute to the (2E)-4-hydroxy-3-methylbut-2-enyl diphosphate site. Dimethylallyl diphosphate contacts are provided by His43 and His76. His43 and His76 together coordinate isopentenyl diphosphate. Cys98 is a [4Fe-4S] cluster binding site. Position 126 (His126) interacts with (2E)-4-hydroxy-3-methylbut-2-enyl diphosphate. His126 contacts dimethylallyl diphosphate. His126 lines the isopentenyl diphosphate pocket. Glu128 serves as the catalytic Proton donor. Thr166 serves as a coordination point for (2E)-4-hydroxy-3-methylbut-2-enyl diphosphate. Cys196 is a binding site for [4Fe-4S] cluster. (2E)-4-hydroxy-3-methylbut-2-enyl diphosphate is bound by residues Ser224, Ser225, Asn226, and Ser268. Ser224, Ser225, Asn226, and Ser268 together coordinate dimethylallyl diphosphate. Residues Ser224, Ser225, Asn226, and Ser268 each contribute to the isopentenyl diphosphate site.

This sequence belongs to the IspH family. Requires [4Fe-4S] cluster as cofactor.

It catalyses the reaction isopentenyl diphosphate + 2 oxidized [2Fe-2S]-[ferredoxin] + H2O = (2E)-4-hydroxy-3-methylbut-2-enyl diphosphate + 2 reduced [2Fe-2S]-[ferredoxin] + 2 H(+). It carries out the reaction dimethylallyl diphosphate + 2 oxidized [2Fe-2S]-[ferredoxin] + H2O = (2E)-4-hydroxy-3-methylbut-2-enyl diphosphate + 2 reduced [2Fe-2S]-[ferredoxin] + 2 H(+). It functions in the pathway isoprenoid biosynthesis; dimethylallyl diphosphate biosynthesis; dimethylallyl diphosphate from (2E)-4-hydroxy-3-methylbutenyl diphosphate: step 1/1. It participates in isoprenoid biosynthesis; isopentenyl diphosphate biosynthesis via DXP pathway; isopentenyl diphosphate from 1-deoxy-D-xylulose 5-phosphate: step 6/6. Catalyzes the conversion of 1-hydroxy-2-methyl-2-(E)-butenyl 4-diphosphate (HMBPP) into a mixture of isopentenyl diphosphate (IPP) and dimethylallyl diphosphate (DMAPP). Acts in the terminal step of the DOXP/MEP pathway for isoprenoid precursor biosynthesis. The sequence is that of 4-hydroxy-3-methylbut-2-enyl diphosphate reductase from Chromobacterium violaceum (strain ATCC 12472 / DSM 30191 / JCM 1249 / CCUG 213 / NBRC 12614 / NCIMB 9131 / NCTC 9757 / MK).